Reading from the N-terminus, the 416-residue chain is Serine hydroxymethyltransferase (416 aa).

Residues L121 and 125–127 (GHL) each bind (6S)-5,6,7,8-tetrahydrofolate. Position 229 is an N6-(pyridoxal phosphate)lysine (K229).

It belongs to the SHMT family. As to quaternary structure, homodimer. The cofactor is pyridoxal 5'-phosphate.

It is found in the cytoplasm. The enzyme catalyses (6R)-5,10-methylene-5,6,7,8-tetrahydrofolate + glycine + H2O = (6S)-5,6,7,8-tetrahydrofolate + L-serine. Its pathway is one-carbon metabolism; tetrahydrofolate interconversion. It functions in the pathway amino-acid biosynthesis; glycine biosynthesis; glycine from L-serine: step 1/1. Catalyzes the reversible interconversion of serine and glycine with tetrahydrofolate (THF) serving as the one-carbon carrier. This reaction serves as the major source of one-carbon groups required for the biosynthesis of purines, thymidylate, methionine, and other important biomolecules. Also exhibits THF-independent aldolase activity toward beta-hydroxyamino acids, producing glycine and aldehydes, via a retro-aldol mechanism. The protein is Serine hydroxymethyltransferase of Azoarcus sp. (strain BH72).